Reading from the N-terminus, the 243-residue chain is Ion-translocating oxidoreductase complex subunit E (243 aa).

The next 6 helical transmembrane spans lie at 40-60, 72-92, 94-114, 129-149, 152-172, and 183-203; these read LGMG…ISAL, AFIL…NAWL, DLHK…AILG, ALDG…VGAI, ILGS…HFAF, and GFLI…LFAL.

This sequence belongs to the NqrDE/RnfAE family. As to quaternary structure, the complex is composed of six subunits: RnfA, RnfB, RnfC, RnfD, RnfE and RnfG.

The protein resides in the cellular chromatophore membrane. Part of a membrane-bound complex that couples electron transfer with translocation of ions across the membrane. Required for nitrogen fixation. Involved in electron transfer to nitrogenase. The polypeptide is Ion-translocating oxidoreductase complex subunit E (Rhodobacter capsulatus (Rhodopseudomonas capsulata)).